The sequence spans 58 residues: Small ribosomal subunit protein bS21 (58 aa).

A compositionally biased stretch (basic and acidic residues) spans 32–42 (IRKREHYEKPS). Residues 32-58 (IRKREHYEKPSVRRKKKSEAARKRKFN) are disordered. Residues 43 to 58 (VRRKKKSEAARKRKFN) are compositionally biased toward basic residues.

It belongs to the bacterial ribosomal protein bS21 family.

In Lachnospira eligens (strain ATCC 27750 / DSM 3376 / VPI C15-48 / C15-B4) (Eubacterium eligens), this protein is Small ribosomal subunit protein bS21.